The sequence spans 462 residues: Sensor histidine kinase RegB (462 aa).

The Cytoplasmic segment spans residues 1-25 (MILGPDGILNRDTRGDWVRLRTLIL). A helical membrane pass occupies residues 26–45 (LRWMAVAGQLAAIVVTDWYL). Topologically, residues 46–51 (GVRLPM) are extracellular. Residues 52-70 (GLCFMAVGASVIANVIATF) form a helical membrane-spanning segment. Residues 71 to 78 (VFPQNRRL) lie on the Cytoplasmic side of the membrane. A helical membrane pass occupies residues 79-96 (TEFQALMILLFDLTQLSF). Over 97-103 (LLFLTGG) the chain is Extracellular. The chain crosses the membrane as a helical span at residues 104 to 123 (LTNPFALLILAPVTISALAL). Residues 124–129 (ELRTTV) are Cytoplasmic-facing. The chain crosses the membrane as a helical span at residues 130 to 149 (ILGAIAIGLLTFTAYFHLPL). At 150–164 (ILADGSSLSVPRMFE) the chain is on the extracellular side. Residues 165–182 (FGFWLAIVIGILFLGLYS) traverse the membrane as a helical segment. The Cytoplasmic portion of the chain corresponds to 183 to 462 (RRVAIEIRSM…PLGENVLIQT (280 aa)). The Histidine kinase domain occupies 218–445 (AAAHELGTPL…IVEVIWPVDR (228 aa)). The residue at position 221 (His221) is a Phosphohistidine; by autocatalysis.

Its subcellular location is the cell inner membrane. The enzyme catalyses ATP + protein L-histidine = ADP + protein N-phospho-L-histidine.. Functionally, member of the two-component regulatory system RegB/RegA. Involved in the positive regulation of photosynthesis gene expression in response to anaerobiosis. Also involved in positive regulation of the cbbI and cbbII Calvin cycle CO2 fixation operons, as well as in regulation of expression of genes involved in alternative CO2 fixation pathways. Phosphorylates RegA/PrrA. This is Sensor histidine kinase RegB (regB) from Cereibacter sphaeroides (strain ATCC 17023 / DSM 158 / JCM 6121 / CCUG 31486 / LMG 2827 / NBRC 12203 / NCIMB 8253 / ATH 2.4.1.) (Rhodobacter sphaeroides).